Consider the following 309-residue polypeptide: Heme A synthase (309 aa).

The Cytoplasmic portion of the chain corresponds to 1-6 (MTKKLK). A helical transmembrane segment spans residues 7-27 (ILSVISTICMIPLLLGGALVT). The Extracellular portion of the chain corresponds to 28 to 62 (KTGSADGCGNSWPLCEGQFLPTKISFEMFIELSHR). Cys35 and Cys42 are joined by a disulfide. Glu58 is an active-site residue. His61 serves as a coordination point for heme o. Residues 63–83 (GVTGVVGILIVYLTYLVWKEL) form a helical membrane-spanning segment. Residues 84–88 (RHNKE) are Cytoplasmic-facing. The chain crosses the membrane as a helical span at residues 89–109 (VVFLAFSALSLMILQALIGAA). Residues 110-123 (AVVWGQSDFALATH) are Extracellular-facing. His123 is a heme o binding site. A helical transmembrane segment spans residues 124-144 (FGISLVCFAAVFLLMLQLFEI). The Cytoplasmic portion of the chain corresponds to 145-159 (DKKLHTEDIHINKTH). The helical transmembrane segment at 160–180 (RIEIYAISFYTMCVVYSGALV) threads the bilayer. Residues 181–211 (RHTDSNLACRDWPLCVNNSSFGISDYNFYQW) lie on the Extracellular side of the membrane. Cysteines 189 and 195 form a disulfide. Residues 212–232 (VQMGHRLAAGILFIWTVILTI) form a helical membrane-spanning segment. A heme b-binding site is contributed by His216. Residues 233–247 (RMVKHYKNSKVFYWS) lie on the Cytoplasmic side of the membrane. The chain crosses the membrane as a helical span at residues 248-268 (WLITLGLITLQVLFGALIIFT). Residues 269–271 (SLN) are Extracellular-facing. Residues 272–292 (LAIALFHALFITCYFGMLSFF) form a helical membrane-spanning segment. His278 lines the heme b pocket. The Cytoplasmic segment spans residues 293-309 (MHLSFRAKRREKYSNQS).

Belongs to the COX15/CtaA family. Type 1 subfamily. As to quaternary structure, interacts with CtaB. Requires heme b as cofactor.

Its subcellular location is the cell membrane. It catalyses the reaction Fe(II)-heme o + 2 A + H2O = Fe(II)-heme a + 2 AH2. It participates in porphyrin-containing compound metabolism; heme A biosynthesis; heme A from heme O: step 1/1. In terms of biological role, catalyzes the conversion of heme O to heme A by two successive hydroxylations of the methyl group at C8. The first hydroxylation forms heme I, the second hydroxylation results in an unstable dihydroxymethyl group, which spontaneously dehydrates, resulting in the formyl group of heme A. The polypeptide is Heme A synthase (Oceanobacillus iheyensis (strain DSM 14371 / CIP 107618 / JCM 11309 / KCTC 3954 / HTE831)).